The following is a 208-amino-acid chain: Small ribosomal subunit protein uS4 (208 aa).

One can recognise an S4 RNA-binding domain in the interval 98-159 (RRLDNVAYRL…KSRKVAAISE (62 aa)).

The protein belongs to the universal ribosomal protein uS4 family. As to quaternary structure, part of the 30S ribosomal subunit. Contacts protein S5. The interaction surface between S4 and S5 is involved in control of translational fidelity.

One of the primary rRNA binding proteins, it binds directly to 16S rRNA where it nucleates assembly of the body of the 30S subunit. Its function is as follows. With S5 and S12 plays an important role in translational accuracy. In Citrifermentans bemidjiense (strain ATCC BAA-1014 / DSM 16622 / JCM 12645 / Bem) (Geobacter bemidjiensis), this protein is Small ribosomal subunit protein uS4.